A 115-amino-acid chain; its full sequence is U3-lycotoxin-Ls1k (115 aa).

Residues 1-20 form the signal peptide; that stretch reads MKSVLLFGVLLVTLFSYSSA. Residues 21-44 constitute a propeptide that is removed on maturation; sequence EMLDDFDQADEDELLSLIEKEEAR. Intrachain disulfides connect Cys48-Cys63, Cys55-Cys72, Cys62-Cys87, and Cys74-Cys85.

It belongs to the neurotoxin 19 (CSTX) family. 01 subfamily. Expressed by the venom gland.

The protein resides in the secreted. This Lycosa singoriensis (Wolf spider) protein is U3-lycotoxin-Ls1k.